The following is a 284-amino-acid chain: BES1/BZR1 homolog protein 3 (284 aa).

Disordered stretches follow at residues 1 to 21 and 85 to 116; these read MTSGTRTPTWKERENNKRRER and GSTSASPCSSYQHSPRASYNPSPSSSSFPSPT. Positions 6–88 are required for DNA-binding; it reads RTPTWKEREN…RMDLMNGSTS (83 aa). A compositionally biased stretch (polar residues) spans 85 to 97; that stretch reads GSTSASPCSSYQH. A compositionally biased stretch (low complexity) spans 98–114; sequence SPRASYNPSPSSSSFPS. The residue at position 153 (Thr153) is a Phosphothreonine.

It belongs to the BZR/LAT61 family. In terms of processing, phosphorylated. Phosphorylation increases protein degradation.

This chain is BES1/BZR1 homolog protein 3 (BEH3), found in Arabidopsis thaliana (Mouse-ear cress).